The following is a 305-amino-acid chain: Protein hrde-2 (305 aa).

Disordered stretches follow at residues 211 to 233 (AEMV…PVPA) and 267 to 305 (EMSN…EYCQ). Positions 215 to 227 (PSNTTGSSGSPMS) are enriched in polar residues. Over residues 268 to 287 (MSNDEYSPDESENDENEYDY) the composition is skewed to acidic residues. Over residues 289-305 (NAARYDDGYDEGHEYCQ) the composition is skewed to basic and acidic residues.

In terms of tissue distribution, expressed throughout the male and female germline.

The protein resides in the nucleus. Plays a role in germline RNA interference (RNAi), and in particular is required for piwi-interacting RNA (piRNA) gene silencing. Facilitates the binding of the argonaut protein hrde-1 to small interfering RNAs (siRNAs) targets that are required for transgenerational epigenetic inheritance and germline immortality. The chain is Protein hrde-2 from Caenorhabditis elegans.